A 227-amino-acid polypeptide reads, in one-letter code: MNVSAVIVAAGRSTRMNKSLNKVYLSIAGKPVLYYSIKAFDEIEWIKEIIVVTSPEETEYCQENVLEKFYWNKPFKIVKGGEERQYSVYNGISVVDKDCEIVAIHDGARPLVTKEIIMEAIKAAYLYKAAAVGVPVKDTIKVADEDNFILDTPDRRYLWAIQTPQVFEKELIVKAHRKALEEGFLGTDDSVLVERMGFKVKLVEGDYKNIKITTPEDLVVAELFLRK.

This sequence belongs to the IspD/TarI cytidylyltransferase family. IspD subfamily.

The enzyme catalyses 2-C-methyl-D-erythritol 4-phosphate + CTP + H(+) = 4-CDP-2-C-methyl-D-erythritol + diphosphate. The protein operates within isoprenoid biosynthesis; isopentenyl diphosphate biosynthesis via DXP pathway; isopentenyl diphosphate from 1-deoxy-D-xylulose 5-phosphate: step 2/6. Catalyzes the formation of 4-diphosphocytidyl-2-C-methyl-D-erythritol from CTP and 2-C-methyl-D-erythritol 4-phosphate (MEP). This is 2-C-methyl-D-erythritol 4-phosphate cytidylyltransferase from Caldanaerobacter subterraneus subsp. tengcongensis (strain DSM 15242 / JCM 11007 / NBRC 100824 / MB4) (Thermoanaerobacter tengcongensis).